We begin with the raw amino-acid sequence, 52 residues long: Large ribosomal subunit protein bL33 (52 aa).

This sequence belongs to the bacterial ribosomal protein bL33 family.

The sequence is that of Large ribosomal subunit protein bL33 from Anaeromyxobacter sp. (strain Fw109-5).